The primary structure comprises 383 residues: Queuine tRNA-ribosyltransferase (383 aa).

Residue D89 is the Proton acceptor of the active site. Residues 89–93, D143, Q187, and G214 each bind substrate; that span reads DSGGF. Residues 245-251 are RNA binding; it reads GVGDLID. Residue D264 is the Nucleophile of the active site. Residues 269–273 are RNA binding; important for wobble base 34 recognition; the sequence is TRNAR. Zn(2+) is bound by residues C302, C304, C307, and H333.

The protein belongs to the queuine tRNA-ribosyltransferase family. Homodimer. Within each dimer, one monomer is responsible for RNA recognition and catalysis, while the other monomer binds to the replacement base PreQ1. Zn(2+) is required as a cofactor.

It carries out the reaction 7-aminomethyl-7-carbaguanine + guanosine(34) in tRNA = 7-aminomethyl-7-carbaguanosine(34) in tRNA + guanine. It functions in the pathway tRNA modification; tRNA-queuosine biosynthesis. Catalyzes the base-exchange of a guanine (G) residue with the queuine precursor 7-aminomethyl-7-deazaguanine (PreQ1) at position 34 (anticodon wobble position) in tRNAs with GU(N) anticodons (tRNA-Asp, -Asn, -His and -Tyr). Catalysis occurs through a double-displacement mechanism. The nucleophile active site attacks the C1' of nucleotide 34 to detach the guanine base from the RNA, forming a covalent enzyme-RNA intermediate. The proton acceptor active site deprotonates the incoming PreQ1, allowing a nucleophilic attack on the C1' of the ribose to form the product. After dissociation, two additional enzymatic reactions on the tRNA convert PreQ1 to queuine (Q), resulting in the hypermodified nucleoside queuosine (7-(((4,5-cis-dihydroxy-2-cyclopenten-1-yl)amino)methyl)-7-deazaguanosine). The protein is Queuine tRNA-ribosyltransferase of Thermodesulfovibrio yellowstonii (strain ATCC 51303 / DSM 11347 / YP87).